We begin with the raw amino-acid sequence, 268 residues long: Putative pyruvate, phosphate dikinase regulatory protein (268 aa).

147 to 154 (GLSRTSKT) provides a ligand contact to ADP.

It belongs to the pyruvate, phosphate/water dikinase regulatory protein family. PDRP subfamily.

It carries out the reaction N(tele)-phospho-L-histidyl/L-threonyl-[pyruvate, phosphate dikinase] + ADP = N(tele)-phospho-L-histidyl/O-phospho-L-threonyl-[pyruvate, phosphate dikinase] + AMP + H(+). It catalyses the reaction N(tele)-phospho-L-histidyl/O-phospho-L-threonyl-[pyruvate, phosphate dikinase] + phosphate + H(+) = N(tele)-phospho-L-histidyl/L-threonyl-[pyruvate, phosphate dikinase] + diphosphate. Bifunctional serine/threonine kinase and phosphorylase involved in the regulation of the pyruvate, phosphate dikinase (PPDK) by catalyzing its phosphorylation/dephosphorylation. This chain is Putative pyruvate, phosphate dikinase regulatory protein, found in Clostridium beijerinckii (strain ATCC 51743 / NCIMB 8052) (Clostridium acetobutylicum).